The primary structure comprises 378 residues: Erythronate-4-phosphate dehydrogenase (378 aa).

Substrate is bound by residues S45 and T66. NAD(+) contacts are provided by D146 and T175. Residue R208 is part of the active site. D232 is an NAD(+) binding site. The active site involves E237. H254 serves as the catalytic Proton donor. G257 contacts NAD(+). Substrate is bound at residue Y258.

Belongs to the D-isomer specific 2-hydroxyacid dehydrogenase family. PdxB subfamily. As to quaternary structure, homodimer.

It is found in the cytoplasm. The catalysed reaction is 4-phospho-D-erythronate + NAD(+) = (R)-3-hydroxy-2-oxo-4-phosphooxybutanoate + NADH + H(+). It participates in cofactor biosynthesis; pyridoxine 5'-phosphate biosynthesis; pyridoxine 5'-phosphate from D-erythrose 4-phosphate: step 2/5. In terms of biological role, catalyzes the oxidation of erythronate-4-phosphate to 3-hydroxy-2-oxo-4-phosphonooxybutanoate. This Escherichia coli (strain ATCC 8739 / DSM 1576 / NBRC 3972 / NCIMB 8545 / WDCM 00012 / Crooks) protein is Erythronate-4-phosphate dehydrogenase.